The sequence spans 921 residues: Valine--tRNA ligase (921 aa).

The short motif at 40-50 is the 'HIGH' region element; it reads PNVTGSLHMGH. Residues 522 to 526 carry the 'KMSKS' region motif; that stretch reads KMSKS. Lys-525 contacts ATP. Residues 849–921 adopt a coiled-coil conformation; the sequence is MADLIDKEAE…LQHKNRIESL (73 aa).

This sequence belongs to the class-I aminoacyl-tRNA synthetase family. ValS type 1 subfamily. Monomer.

It is found in the cytoplasm. The enzyme catalyses tRNA(Val) + L-valine + ATP = L-valyl-tRNA(Val) + AMP + diphosphate. Functionally, catalyzes the attachment of valine to tRNA(Val). As ValRS can inadvertently accommodate and process structurally similar amino acids such as threonine, to avoid such errors, it has a 'posttransfer' editing activity that hydrolyzes mischarged Thr-tRNA(Val) in a tRNA-dependent manner. The protein is Valine--tRNA ligase of Legionella pneumophila (strain Lens).